A 270-amino-acid polypeptide reads, in one-letter code: Putative phosphoenolpyruvate synthase regulatory protein (270 aa).

154-161 (GVSRAGKT) lines the ADP pocket.

This sequence belongs to the pyruvate, phosphate/water dikinase regulatory protein family. PSRP subfamily.

It catalyses the reaction [pyruvate, water dikinase] + ADP = [pyruvate, water dikinase]-phosphate + AMP + H(+). It carries out the reaction [pyruvate, water dikinase]-phosphate + phosphate + H(+) = [pyruvate, water dikinase] + diphosphate. In terms of biological role, bifunctional serine/threonine kinase and phosphorylase involved in the regulation of the phosphoenolpyruvate synthase (PEPS) by catalyzing its phosphorylation/dephosphorylation. This Deinococcus geothermalis (strain DSM 11300 / CIP 105573 / AG-3a) protein is Putative phosphoenolpyruvate synthase regulatory protein.